The sequence spans 135 residues: Small ribosomal subunit protein uS12c (135 aa).

This sequence belongs to the universal ribosomal protein uS12 family. In terms of assembly, part of the 30S ribosomal subunit.

It is found in the plastid. Its subcellular location is the chloroplast. With S4 and S5 plays an important role in translational accuracy. Located at the interface of the 30S and 50S subunits. In Adiantum capillus-veneris (Maidenhair fern), this protein is Small ribosomal subunit protein uS12c (rps12).